The chain runs to 152 residues: Large ribosomal subunit protein uL13 (152 aa).

The segment at 130 to 152 is disordered; that stretch reads HPHEAQSPEVLDLASKNPKNTRS.

It belongs to the universal ribosomal protein uL13 family. In terms of assembly, part of the 50S ribosomal subunit.

Functionally, this protein is one of the early assembly proteins of the 50S ribosomal subunit, although it is not seen to bind rRNA by itself. It is important during the early stages of 50S assembly. The sequence is that of Large ribosomal subunit protein uL13 from Dinoroseobacter shibae (strain DSM 16493 / NCIMB 14021 / DFL 12).